A 562-amino-acid chain; its full sequence is NAD-dependent malic enzyme (562 aa).

Tyrosine 101 (proton donor) is an active-site residue. An NAD(+)-binding site is contributed by arginine 154. Lysine 172 serves as the catalytic Proton acceptor. A divalent metal cation is bound by residues glutamate 243, aspartate 244, and aspartate 267. NAD(+) contacts are provided by aspartate 267 and asparagine 415.

The protein belongs to the malic enzymes family. Homotetramer. Mg(2+) serves as cofactor. Mn(2+) is required as a cofactor.

It carries out the reaction (S)-malate + NAD(+) = pyruvate + CO2 + NADH. The enzyme catalyses oxaloacetate + H(+) = pyruvate + CO2. The chain is NAD-dependent malic enzyme from Shewanella pealeana (strain ATCC 700345 / ANG-SQ1).